A 419-amino-acid chain; its full sequence is Methionine aminopeptidase 2 (419 aa).

Residues Met1–Pro69 form a disordered region. Residues Val11–Ser29 are compositionally biased toward basic and acidic residues. A compositionally biased stretch (acidic residues) spans Glu30 to Ser41. Residues Lys48 to Ile61 are compositionally biased toward basic residues. Residue His172 coordinates substrate. Residues Asp192, Asp203, and His272 each contribute to the a divalent metal cation site. His280 is a substrate binding site. Glu305 and Glu400 together coordinate a divalent metal cation.

This sequence belongs to the peptidase M24A family. Methionine aminopeptidase eukaryotic type 2 subfamily. Requires Co(2+) as cofactor. Zn(2+) serves as cofactor. Mn(2+) is required as a cofactor. It depends on Fe(2+) as a cofactor.

It is found in the cytoplasm. It carries out the reaction Release of N-terminal amino acids, preferentially methionine, from peptides and arylamides.. Its function is as follows. Cotranslationally removes the N-terminal methionine from nascent proteins. The N-terminal methionine is often cleaved when the second residue in the primary sequence is small and uncharged (Met-Ala-, Cys, Gly, Pro, Ser, Thr, or Val). The protein is Methionine aminopeptidase 2 of Debaryomyces hansenii (strain ATCC 36239 / CBS 767 / BCRC 21394 / JCM 1990 / NBRC 0083 / IGC 2968) (Yeast).